A 249-amino-acid chain; its full sequence is tRNA pseudouridine synthase A (249 aa).

Residue D53 is the Nucleophile of the active site. Position 111 (Y111) interacts with substrate.

This sequence belongs to the tRNA pseudouridine synthase TruA family. In terms of assembly, homodimer.

It catalyses the reaction uridine(38/39/40) in tRNA = pseudouridine(38/39/40) in tRNA. Its function is as follows. Formation of pseudouridine at positions 38, 39 and 40 in the anticodon stem and loop of transfer RNAs. The polypeptide is tRNA pseudouridine synthase A (Streptococcus mutans serotype c (strain ATCC 700610 / UA159)).